The chain runs to 79 residues: Conotoxin Vi6.9 (79 aa).

A signal peptide spans 1 to 22 (MKLTCMVIITVLFLTASQLITA). The propeptide occupies 23–47 (DYSRDQRQYRAVRLGDEMRNFKGAR). Cystine bridges form between Cys49–Cys62, Cys56–Cys67, and Cys61–Cys77. 4-hydroxyproline is present on residues Pro60 and Pro63.

The protein belongs to the conotoxin O1 superfamily. Expressed by the venom duct.

The protein localises to the secreted. Ion channel inhibitor that inhibits the increase in intracellular calcium upon depolarization in DRG neurons. In vivo, both intraperitoneal and intracranial injections into mice induce hyperactivity. The polypeptide is Conotoxin Vi6.9 (Conus virgo (Virgin cone)).